Consider the following 100-residue polypeptide: Apolipoprotein C-II (100 aa).

An N-terminal signal peptide occupies residues 1 to 22 (MGSRFLLALFLVLLVLGCEVQA). A lipid binding region spans residues 66-74 (SVDEKLRDM). A lipoprotein lipase cofactor region spans residues 78–100 (SSAAMTTYASIFTDQIFTLLKGE).

The protein belongs to the apolipoprotein C2 family. Post-translationally, proapolipoprotein C-II is synthesized as a sialic acid containing glycoprotein which is subsequently desialylated prior to its proteolytic processing. In terms of processing, proapolipoprotein C-II, the major form found in plasma undergoes proteolytic cleavage of its N-terminal hexapeptide to generate the mature form apolipoprotein C-II, which occurs as the minor form in plasma.

It is found in the secreted. In terms of biological role, component of chylomicrons, very low-density lipoproteins (VLDL), low-density lipoproteins (LDL), and high-density lipoproteins (HDL) in plasma. Plays an important role in lipoprotein metabolism as an activator of lipoprotein lipase. The sequence is that of Apolipoprotein C-II (APOC2) from Bramus lutescens (Transcaucasian mole vole).